The chain runs to 680 residues: WD repeat-containing protein 48 homolog (680 aa).

WD repeat units follow at residues 26–65, 71–110, 113–152, 164–203, 206–245, 248–287, 290–329, and 350–389; these read QHRN…SEKY, HHND…CMST, THRD…ALTA, GSKD…RSMK, GHTE…CVQT, VHKE…NKTL, EEQA…RCTM, and KGGA…KKEQ. The tract at residues 592–616 is disordered; the sequence is ETTPSGGNANNSLQNSQSDANSEGS.

It belongs to the WD repeat WDR48 family. Catalytic component of the Usp12-46 deubiquitylase complex consisting of Usp12-46, Wdr20 and Uaf1; regulatory subunit that, together wtih Wdr20, stabilizes Usp12-46. The Usp12-46 deubiquitylase complex associates with arr/arrow; the interaction leads to deubiquitination and stabilization of arr/arrow.

Regulatory component of the Usp12-46 deubiquitylase complex. activates deubiquitination by increasing the catalytic turnover without increasing the affinity of deubiquitinating enzymes for the substrate. The complex deubiquitylates the wg/wingless-signaling receptor arr/arrow, which stabilizes the receptor and increases its concentration at the cell surface; this enhances the sensitivity of cells to wg/wingless-signal stimulation. This increases the amplitude and spatial range of the signaling response to the wg/wingless morphogen gradient, facilitating the precise concentration-dependent regulation of its target genes. Together with Wdr20 and Usp12-46 required for wg/wingless-mediated signaling in the wing imaginal disc and for wg/wingless-dependent regulation of intestinal stem cell proliferation. In Drosophila yakuba (Fruit fly), this protein is WD repeat-containing protein 48 homolog.